A 68-amino-acid polypeptide reads, in one-letter code: Protein P33 (68 aa).

Positions Ile34–Ala63 form a coiled coil.

In terms of biological role, assembly protein. The polypeptide is Protein P33 (XXXIII) (Acinetobacter calcoaceticus (Arthrobacter siderocapsulatus)).